A 605-amino-acid chain; its full sequence is Adenine deaminase (605 aa).

Belongs to the metallo-dependent hydrolases superfamily. Adenine deaminase family. Mn(2+) is required as a cofactor.

The catalysed reaction is adenine + H2O + H(+) = hypoxanthine + NH4(+). The sequence is that of Adenine deaminase from Mesorhizobium japonicum (strain LMG 29417 / CECT 9101 / MAFF 303099) (Mesorhizobium loti (strain MAFF 303099)).